A 134-amino-acid chain; its full sequence is MSDLYRFGISLDRELIEAFDRHIKGQGYQSRSEALRDLIRNELLRKTTAEGGLVAGAIVMTYDHHKRELVNRLIDIQHDFHDLIISTQHVHLDHENCLEVIAVKGNAPDIEKLSSALKVLVGVKHLDLSLSSAD.

His78, His89, His91, and Cys97 together coordinate Ni(2+).

It belongs to the transcriptional regulatory CopG/NikR family. Ni(2+) serves as cofactor.

In terms of biological role, transcriptional regulator. The protein is Putative nickel-responsive regulator of Chlorobaculum parvum (strain DSM 263 / NCIMB 8327) (Chlorobium vibrioforme subsp. thiosulfatophilum).